Consider the following 510-residue polypeptide: Probable serine/threonine-protein kinase 2 (510 aa).

Positions 111-364 (YVLNKKIGKG…ALQALGHQWF (254 aa)) constitute a Protein kinase domain. ATP-binding positions include 117-125 (IGKGSFSTA) and lysine 140. The active-site Proton acceptor is the aspartate 230. The disordered stretch occupies residues 408–428 (NDDIYNNNNNNNQLDPNKNHK).

The protein belongs to the protein kinase superfamily. Ser/Thr protein kinase family.

The protein resides in the membrane. It carries out the reaction L-seryl-[protein] + ATP = O-phospho-L-seryl-[protein] + ADP + H(+). The enzyme catalyses L-threonyl-[protein] + ATP = O-phospho-L-threonyl-[protein] + ADP + H(+). The polypeptide is Probable serine/threonine-protein kinase 2 (PK2) (Plasmodium falciparum (isolate K1 / Thailand)).